Reading from the N-terminus, the 344-residue chain is MALPRPTSPHARGSNRTPAIMRLVLGACVPGLLTLTWLYGPGTLLNLAWASLVALACEAAMLALRKRPPGVFLKDGSALVTALLLAVALPPYAPWWLTLVATFFALVFGKHLYGGLGQNPFNPAMLGYVVALVSFPLEMTRWPSPDSALGLPDSLREFLGLATRPDAWAHATALDVLKTDRSLTVDELFAGNPAFGHLGSAGSEWVNLAFLLGGLFLLWRRLFTWHAPLGMLAGLFAMSLLFWNGSGSDSHGSPLFHLFSGATMLGAFFIVTDPVSGATSNRGRLVFGLGVGVLTYVIRAWGGYPDGMAFAVLLMNLAAPTIDYYTRPRTYGHRKAERGFKAGD.

The next 4 membrane-spanning stretches (helical) occupy residues 23–43 (LVLG…GPGT), 44–64 (LLNL…MLAL), 77–99 (SALV…WLTL), and 120–140 (PFNP…LEMT). Thr172 carries the post-translational modification FMN phosphoryl threonine. The next 5 helical transmembrane spans lie at 198 to 218 (LGSA…LFLL), 222 to 242 (LFTW…SLLF), 252 to 272 (GSPL…FIVT), 285 to 305 (LVFG…GGYP), and 306 to 326 (DGMA…DYYT).

Belongs to the NqrB/RnfD family. As to quaternary structure, the complex is composed of six subunits: RnfA, RnfB, RnfC, RnfD, RnfE and RnfG. It depends on FMN as a cofactor.

The protein resides in the cell inner membrane. Part of a membrane-bound complex that couples electron transfer with translocation of ions across the membrane. This Pseudomonas aeruginosa (strain LESB58) protein is Ion-translocating oxidoreductase complex subunit D.